Reading from the N-terminus, the 352-residue chain is Cyclin-dependent kinase-like 1 (352 aa).

The Protein kinase domain occupies 4 to 287 (YEKIGKIGEG…CEQLLQHPYF (284 aa)). ATP is bound by residues 10-18 (IGEGSYGVV) and lysine 33. A [NKR]KIAxRE motif is present at residues 45–51 (KKIALRE). Aspartate 126 functions as the Proton acceptor in the catalytic mechanism.

This sequence belongs to the protein kinase superfamily. CMGC Ser/Thr protein kinase family. CDC2/CDKX subfamily.

It localises to the cytoplasm. The protein resides in the nucleus. The catalysed reaction is L-seryl-[protein] + ATP = O-phospho-L-seryl-[protein] + ADP + H(+). It carries out the reaction L-threonyl-[protein] + ATP = O-phospho-L-threonyl-[protein] + ADP + H(+). This Rattus norvegicus (Rat) protein is Cyclin-dependent kinase-like 1.